Reading from the N-terminus, the 670-residue chain is Transketolase, plasmid (670 aa).

His32 serves as a coordination point for substrate. Thiamine diphosphate is bound by residues His72 and 120–122 (GPL). Asp161 is a Mg(2+) binding site. Residues Gly162 and Asn191 each coordinate thiamine diphosphate. Residues Asn191 and Ile193 each contribute to the Mg(2+) site. Substrate-binding residues include His267, Arg364, and Ser391. Residue His267 coordinates thiamine diphosphate. The active-site Proton donor is Glu417. Phe443 is a binding site for thiamine diphosphate. The substrate site is built by His467, Asp475, and Arg526.

Belongs to the transketolase family. In terms of assembly, homodimer. The cofactor is Mg(2+). It depends on Ca(2+) as a cofactor. Requires Mn(2+) as cofactor. Co(2+) serves as cofactor. Thiamine diphosphate is required as a cofactor.

It carries out the reaction D-sedoheptulose 7-phosphate + D-glyceraldehyde 3-phosphate = aldehydo-D-ribose 5-phosphate + D-xylulose 5-phosphate. The protein operates within carbohydrate biosynthesis; Calvin cycle. Catalyzes the transfer of a two-carbon ketol group from a ketose donor to an aldose acceptor, via a covalent intermediate with the cofactor thiamine pyrophosphate. This chain is Transketolase, plasmid (cbbTP), found in Cupriavidus necator (strain ATCC 17699 / DSM 428 / KCTC 22496 / NCIMB 10442 / H16 / Stanier 337) (Ralstonia eutropha).